Consider the following 62-residue polypeptide: Short neurotoxin 1 (62 aa).

Residues 1–20 (LECHNQQSSEPPTTTRCSGG) form a disordered region. Cystine bridges form between C3/C24, C17/C41, C43/C54, and C55/C60.

It belongs to the three-finger toxin family. Short-chain subfamily. Type I alpha-neurotoxin sub-subfamily. As to expression, expressed by the venom gland.

Its subcellular location is the secreted. Its function is as follows. Binds to muscle nicotinic acetylcholine receptor (nAChR) and inhibit acetylcholine from binding to the receptor, thereby impairing neuromuscular transmission. The sequence is that of Short neurotoxin 1 from Naja mossambica (Mozambique spitting cobra).